Consider the following 142-residue polypeptide: Peptide methionine sulfoxide reductase MsrB (142 aa).

The region spanning 10-132 (EEEWKKVLTP…NSVSLNFKTE (123 aa)) is the MsrB domain. Zn(2+) is bound by residues cysteine 49, cysteine 52, cysteine 98, and cysteine 101. Cysteine 121 (nucleophile) is an active-site residue.

This sequence belongs to the MsrB Met sulfoxide reductase family. It depends on Zn(2+) as a cofactor.

It carries out the reaction L-methionyl-[protein] + [thioredoxin]-disulfide + H2O = L-methionyl-(R)-S-oxide-[protein] + [thioredoxin]-dithiol. The sequence is that of Peptide methionine sulfoxide reductase MsrB from Methanosarcina barkeri (strain Fusaro / DSM 804).